The sequence spans 251 residues: Small ribosomal subunit protein uS2 (251 aa).

Belongs to the universal ribosomal protein uS2 family.

In Arthrospira platensis (Spirulina platensis), this protein is Small ribosomal subunit protein uS2 (rpsB).